The sequence spans 401 residues: tRNA(Met) cytidine acetate ligase (401 aa).

ATP-binding positions include 7–20, Gly101, Asn160, and 185–186; these read VVEYNPFHNGHLYH and RI.

Belongs to the TmcAL family.

It localises to the cytoplasm. The catalysed reaction is cytidine(34) in elongator tRNA(Met) + acetate + ATP = N(4)-acetylcytidine(34) in elongator tRNA(Met) + AMP + diphosphate. Functionally, catalyzes the formation of N(4)-acetylcytidine (ac(4)C) at the wobble position of elongator tRNA(Met), using acetate and ATP as substrates. First activates an acetate ion to form acetyladenylate (Ac-AMP) and then transfers the acetyl group to tRNA to form ac(4)C34. The polypeptide is tRNA(Met) cytidine acetate ligase (Anoxybacillus flavithermus (strain DSM 21510 / WK1)).